Here is a 251-residue protein sequence, read N- to C-terminus: GTP cyclohydrolase 1 type 2 homolog (251 aa).

5 residues coordinate a divalent metal cation: H62, H63, D103, H215, and E219.

Belongs to the GTP cyclohydrolase I type 2/NIF3 family. As to quaternary structure, homohexamer.

This chain is GTP cyclohydrolase 1 type 2 homolog, found in Mycoplasmopsis pulmonis (strain UAB CTIP) (Mycoplasma pulmonis).